The following is a 317-amino-acid chain: tRNA dimethylallyltransferase (317 aa).

14-21 contacts ATP; the sequence is GPTAVGKT. 16 to 21 serves as a coordination point for substrate; sequence TAVGKT. An interaction with substrate tRNA region spans residues 39 to 42; sequence DSMQ.

This sequence belongs to the IPP transferase family. Monomer. Mg(2+) is required as a cofactor.

The enzyme catalyses adenosine(37) in tRNA + dimethylallyl diphosphate = N(6)-dimethylallyladenosine(37) in tRNA + diphosphate. Catalyzes the transfer of a dimethylallyl group onto the adenine at position 37 in tRNAs that read codons beginning with uridine, leading to the formation of N6-(dimethylallyl)adenosine (i(6)A). This Bacillus cereus (strain B4264) protein is tRNA dimethylallyltransferase.